The following is a 639-amino-acid chain: Chaperone protein DnaK (639 aa).

At T198 the chain carries Phosphothreonine; by autocatalysis. The segment at S605 to D624 is disordered.

Belongs to the heat shock protein 70 family.

In terms of biological role, acts as a chaperone. The polypeptide is Chaperone protein DnaK (Shewanella putrefaciens (strain CN-32 / ATCC BAA-453)).